The sequence spans 446 residues: Chromosomal replication initiator protein DnaA (446 aa).

The segment at 1–72 is domain I, interacts with DnaA modulators; sequence MENILDLWNQ…ADTIYELTGE (72 aa). The interval 72 to 109 is domain II; the sequence is EELSVKFVIPQNQDEENFLPKPQVKKAAKEEPSDFPQS. Residues 110-326 are domain III, AAA+ region; the sequence is MLNPKYTFDT…GALIRVVAYS (217 aa). G154, G156, K157, and T158 together coordinate ATP. Residues 327–446 are domain IV, binds dsDNA; it reads SLINKDINAD…QVKEIKELLK (120 aa).

This sequence belongs to the DnaA family. As to quaternary structure, oligomerizes as a right-handed, spiral filament on DNA at oriC.

It localises to the cytoplasm. Its function is as follows. Plays an essential role in the initiation and regulation of chromosomal replication. ATP-DnaA binds to the origin of replication (oriC) to initiate formation of the DNA replication initiation complex once per cell cycle. Binds the DnaA box (a 9 base pair repeat at the origin) and separates the double-stranded (ds)DNA. Forms a right-handed helical filament on oriC DNA; dsDNA binds to the exterior of the filament while single-stranded (ss)DNA is stabiized in the filament's interior. The ATP-DnaA-oriC complex binds and stabilizes one strand of the AT-rich DNA unwinding element (DUE), permitting loading of DNA polymerase. After initiation quickly degrades to an ADP-DnaA complex that is not apt for DNA replication. Binds acidic phospholipids. The sequence is that of Chromosomal replication initiator protein DnaA from Bacillus velezensis (strain DSM 23117 / BGSC 10A6 / LMG 26770 / FZB42) (Bacillus amyloliquefaciens subsp. plantarum).